The following is a 324-amino-acid chain: MNEPLVFMFSGQGSQYYHMGKELFKENTVFRQSMLEMDAIAARRIGTSIVEEIYHPGKRVSDPFDSILFSHPAIFMIEYSLYKVLEDRGIYPDYVLGSSLGEFAAAAVSGVSDAEDMLDCILEQAIIIQNSCDKGKMLAILDKPQLLNDHPQLFGNSELISINYDSHFVISGEEDHIRKIMEDLKEKQILCQLLPVSYAFHSSLIDPAESAYAEFLRSKSFQKPSIPIVSSLTGSCLHVMDENFFWNAVRKPMMFREAIRYLESQHTCKFIDLGPSGTLAAFVKQLIPGDSADRCCSIITPFHQELKNLNTVEYFRTPERKFTR.

Serine 99 is an active-site residue.

It localises to the cytoplasm. The protein operates within antibiotic biosynthesis; bacillaene biosynthesis. Probably involved in some intermediate steps for the synthesis of the antibiotic polyketide bacillaene which is involved in secondary metabolism. The sequence is that of Polyketide biosynthesis acyltransferase homolog PksD (pksD) from Bacillus subtilis (strain 168).